We begin with the raw amino-acid sequence, 510 residues long: 1,3-beta-glucanosyltransferase gas5 (510 aa).

The N-terminal stretch at 1-22 is a signal peptide; the sequence is MNFLHFLTTSLLLLGGSRLALA. Residues Cys70 and Cys99 are joined by a disulfide bond. Tyr88 serves as a coordination point for (1,3-beta-D-glucosyl)n. Asn147 is a glycosylation site (N-linked (GlcNAc...) asparagine). Positions 158, 159, 200, and 205 each coordinate (1,3-beta-D-glucosyl)n. Glu159 acts as the Proton donor in catalysis. Intrachain disulfides connect Cys214–Cys353 and Cys232–Cys264. N-linked (GlcNAc...) asparagine glycosylation is found at Asn216 and Asn252. The Nucleophile role is filled by Glu261. Tyr300 is a (1,3-beta-D-glucosyl)n binding site. N-linked (GlcNAc...) asparagine glycans are attached at residues Asn318, Asn337, and Asn397. A disordered region spans residues 424 to 456; sequence QSSTSGSSSGSSSASTTASSSSVSSGSSISSGS. A lipid anchor (GPI-anchor amidated serine) is attached at Ser485. Positions 486–510 are cleaved as a propeptide — removed in mature form; it reads SASTFNLSRFYVFAGILAISGLVFA. Asn491 is a glycosylation site (N-linked (GlcNAc...) asparagine).

The protein belongs to the glycosyl hydrolase 72 family. Post-translationally, the GPI-anchor is attached to the protein in the endoplasmic reticulum and serves to target the protein to the cell surface. There, the glucosamine-inositol phospholipid moiety is cleaved off and the GPI-modified mannoprotein is covalently attached via its lipidless GPI glycan remnant to the 1,6-beta-glucan of the outer cell wall layer.

Its subcellular location is the secreted. It localises to the cell wall. It is found in the membrane. In terms of biological role, splits internally a 1,3-beta-glucan molecule and transfers the newly generated reducing end (the donor) to the non-reducing end of another 1,3-beta-glucan molecule (the acceptor) forming a 1,3-beta linkage, resulting in the elongation of 1,3-beta-glucan chains in the cell wall. This Schizosaccharomyces pombe (strain 972 / ATCC 24843) (Fission yeast) protein is 1,3-beta-glucanosyltransferase gas5 (gas5).